The sequence spans 156 residues: 6,7-dimethyl-8-ribityllumazine synthase (156 aa).

Residues F24, 56–58 (SFE), and 80–82 (AVV) contribute to the 5-amino-6-(D-ribitylamino)uracil site. 85–86 (ET) lines the (2S)-2-hydroxy-3-oxobutyl phosphate pocket. H88 functions as the Proton donor in the catalytic mechanism. F113 lines the 5-amino-6-(D-ribitylamino)uracil pocket. Position 127 (R127) interacts with (2S)-2-hydroxy-3-oxobutyl phosphate.

Belongs to the DMRL synthase family.

It carries out the reaction (2S)-2-hydroxy-3-oxobutyl phosphate + 5-amino-6-(D-ribitylamino)uracil = 6,7-dimethyl-8-(1-D-ribityl)lumazine + phosphate + 2 H2O + H(+). It participates in cofactor biosynthesis; riboflavin biosynthesis; riboflavin from 2-hydroxy-3-oxobutyl phosphate and 5-amino-6-(D-ribitylamino)uracil: step 1/2. In terms of biological role, catalyzes the formation of 6,7-dimethyl-8-ribityllumazine by condensation of 5-amino-6-(D-ribitylamino)uracil with 3,4-dihydroxy-2-butanone 4-phosphate. This is the penultimate step in the biosynthesis of riboflavin. The polypeptide is 6,7-dimethyl-8-ribityllumazine synthase (Thermococcus kodakarensis (strain ATCC BAA-918 / JCM 12380 / KOD1) (Pyrococcus kodakaraensis (strain KOD1))).